Reading from the N-terminus, the 274-residue chain is Large ribosomal subunit protein uL2c (274 aa).

The tract at residues 224-274 (NPVDHPHGGGEGRAPIGRKKPTTPWGYPALGRKSRKRNKYSEKFILRHRSK) is disordered.

This sequence belongs to the universal ribosomal protein uL2 family. As to quaternary structure, part of the 50S ribosomal subunit.

The protein resides in the plastid. The protein localises to the chloroplast. This Ipomoea purpurea (Common morning glory) protein is Large ribosomal subunit protein uL2c (rpl2).